The sequence spans 480 residues: Protein nucleotidyltransferase YdiU (480 aa).

Positions 86, 88, 89, 109, 121, 122, 172, and 179 each coordinate ATP. Asp-248 acts as the Proton acceptor in catalysis. 2 residues coordinate Mg(2+): Asn-249 and Asp-258. Asp-258 provides a ligand contact to ATP.

It belongs to the SELO family. It depends on Mg(2+) as a cofactor. Mn(2+) serves as cofactor.

It catalyses the reaction L-seryl-[protein] + ATP = 3-O-(5'-adenylyl)-L-seryl-[protein] + diphosphate. It carries out the reaction L-threonyl-[protein] + ATP = 3-O-(5'-adenylyl)-L-threonyl-[protein] + diphosphate. The enzyme catalyses L-tyrosyl-[protein] + ATP = O-(5'-adenylyl)-L-tyrosyl-[protein] + diphosphate. The catalysed reaction is L-histidyl-[protein] + UTP = N(tele)-(5'-uridylyl)-L-histidyl-[protein] + diphosphate. It catalyses the reaction L-seryl-[protein] + UTP = O-(5'-uridylyl)-L-seryl-[protein] + diphosphate. It carries out the reaction L-tyrosyl-[protein] + UTP = O-(5'-uridylyl)-L-tyrosyl-[protein] + diphosphate. Nucleotidyltransferase involved in the post-translational modification of proteins. It can catalyze the addition of adenosine monophosphate (AMP) or uridine monophosphate (UMP) to a protein, resulting in modifications known as AMPylation and UMPylation. The sequence is that of Protein nucleotidyltransferase YdiU from Salmonella heidelberg (strain SL476).